A 347-amino-acid polypeptide reads, in one-letter code: Lipoyl synthase (347 aa).

Residues cysteine 55, cysteine 60, cysteine 66, cysteine 81, cysteine 85, cysteine 88, and serine 292 each coordinate [4Fe-4S] cluster. In terms of domain architecture, Radical SAM core spans 67–281 (WEDREATFLI…RDYGHDIGFA (215 aa)).

It belongs to the radical SAM superfamily. Lipoyl synthase family. The cofactor is [4Fe-4S] cluster.

Its subcellular location is the cytoplasm. The catalysed reaction is [[Fe-S] cluster scaffold protein carrying a second [4Fe-4S](2+) cluster] + N(6)-octanoyl-L-lysyl-[protein] + 2 oxidized [2Fe-2S]-[ferredoxin] + 2 S-adenosyl-L-methionine + 4 H(+) = [[Fe-S] cluster scaffold protein] + N(6)-[(R)-dihydrolipoyl]-L-lysyl-[protein] + 4 Fe(3+) + 2 hydrogen sulfide + 2 5'-deoxyadenosine + 2 L-methionine + 2 reduced [2Fe-2S]-[ferredoxin]. It functions in the pathway protein modification; protein lipoylation via endogenous pathway; protein N(6)-(lipoyl)lysine from octanoyl-[acyl-carrier-protein]: step 2/2. Catalyzes the radical-mediated insertion of two sulfur atoms into the C-6 and C-8 positions of the octanoyl moiety bound to the lipoyl domains of lipoate-dependent enzymes, thereby converting the octanoylated domains into lipoylated derivatives. This chain is Lipoyl synthase, found in Corynebacterium kroppenstedtii (strain DSM 44385 / JCM 11950 / CIP 105744 / CCUG 35717).